The following is a 1330-amino-acid chain: pre-mRNA 3' end processing protein WDR33 (1330 aa).

Alanine 2 is modified (N-acetylalanine). Serine 7 carries the post-translational modification Phosphoserine. Position 46 is an N6-acetyllysine (lysine 46). 7 WD repeats span residues 117–156 (KVKC…FETI), 159–198 (AHDS…VKMF), 200–239 (AHKE…EERI), 242–283 (GHGA…SLAT), 286–325 (AHKN…EELQ), 329–369 (GHKK…EVGG), and 373–412 (AHEG…DKMR). Residues lysine 526, lysine 530, and lysine 560 each participate in a glycyl lysine isopeptide (Lys-Gly) (interchain with G-Cter in SUMO2) cross-link. Residues 566–1330 (QKQADQIQPP…GTSRGSGRGR (765 aa)) form a disordered region. Over residues 588–607 (FSGQGPISQIPQGFQQPHPS) the composition is skewed to polar residues. The Collagen-like domain maps to 617–769 (GPPGPQGQFR…GPASQGIQGP (153 aa)). Positions 622-642 (QGQFRAPGPQGQMGPQGPPMH) are enriched in low complexity. Pro residues predominate over residues 682–694 (PHGPLGPQGPPGP). Composition is skewed to low complexity over residues 695-706 (QGSSGPQGHMGP) and 725-750 (QGHM…GMQG). An Omega-N-methylarginine modification is found at arginine 776. The segment covering 848 to 863 (GPSGSQGQQGPPQGSL) has biased composition (low complexity). Arginine 909 carries the post-translational modification Asymmetric dimethylarginine. The segment covering 926–935 (PGLGQQGAQG) has biased composition (low complexity). 2 stretches are compositionally biased toward basic and acidic residues: residues 965 to 983 (SERR…DRGP) and 992 to 1027 (GPPD…EFEG). An Omega-N-methylarginine modification is found at arginine 981. Arginine 1028 carries the post-translational modification Omega-N-methylarginine. Composition is skewed to basic and acidic residues over residues 1049 to 1061 (PDHR…DGRG) and 1071 to 1115 (EGRR…RGRD). Over residues 1123–1133 (FGPEEGFDASD) the composition is skewed to acidic residues. Basic and acidic residues-rich tracts occupy residues 1134-1143 (EAARGRDLRG), 1163-1211 (EFPR…RERS), and 1236-1253 (SEHR…DRGS). Serine 1204 is modified (phosphoserine). Arginine 1256 carries the omega-N-methylarginine modification. Positions 1275 to 1287 (DGDHHDGYHRDEP) are enriched in basic and acidic residues. Residues 1293–1323 (GSSSSSRGARSGSNWGRGSNMNSGPPRRGTS) are compositionally biased toward low complexity. Arginine 1309 is subject to Asymmetric dimethylarginine; alternate. Arginine 1309 is modified (omega-N-methylarginine; alternate).

Belongs to the WD repeat WDR33 family. In terms of assembly, component of the cleavage and polyadenylation specificity factor (CPSF) module of the pre-mRNA 3'-end processing complex. Interacts with CPSF3/CPSF73. In terms of tissue distribution, most highly expressed in testis.

It localises to the nucleus. In terms of biological role, essential for both cleavage and polyadenylation of pre-mRNA 3' ends. The polypeptide is pre-mRNA 3' end processing protein WDR33 (Wdr33) (Mus musculus (Mouse)).